Reading from the N-terminus, the 2104-residue chain is Phenolphthiocerol synthesis polyketide synthase type I Pks15/1 (2104 aa).

The Ketosynthase family 3 (KS3) domain maps to 41–464 (TEPVAVVGIG…GTNAHVILEE (424 aa)). Active-site for beta-ketoacyl synthase activity residues include Cys211, His346, and His386. The interval 571–887 (TAVVFPGQGS…GQLFSTGMSV (317 aa)) is acyltransferase. The active-site For acyltransferase activity is Ser662. Residues 935-1057 (HALLGAVVER…GMLGVEAASS (123 aa)) form an N-terminal hotdog fold region. A dehydratase region spans residues 935–1095 (HALLGAVVER…YAYGPGFQGL (161 aa)). Positions 935–1207 (HALLGAVVER…TRAMSAAQLR (273 aa)) constitute a PKS/mFAS DH domain. The active-site Proton acceptor; for dehydratase activity is the His967. A C-terminal hotdog fold region spans residues 1069–1207 (AESVDISDGY…TRAMSAAQLR (139 aa)). Asp1128 acts as the Proton donor; for dehydratase activity in catalysis. The segment at 1400 to 1705 (GTLEDLVIEP…QARHIGKVVL (306 aa)) is enoylreductase. NADP(+) is bound by residues 1530–1547 (VLIHAGTGGVGMAAVQLA) and 1719–1734 (TVLITGATGAVGAVLA). The tract at residues 1718–1899 (ATVLITGATG…SVAWGLWEQS (182 aa)) is beta-ketoacyl reductase (KR). The Carrier domain maps to 2004-2079 (DALVGLVCLQ…AIAEYVGRQI (76 aa)). An O-(pantetheine 4'-phosphoryl)serine modification is found at Ser2039. The segment at 2081 to 2104 (DSQATQAEEEKLPESDGEMVSVTA) is disordered.

The protein belongs to the thiolase-like superfamily. Beta-ketoacyl-ACP synthases family. It depends on pantetheine 4'-phosphate as a cofactor.

It carries out the reaction a fatty acyl-[ACP] + malonyl-[ACP] + H(+) = a 3-oxoacyl-[ACP] + holo-[ACP] + CO2. The protein operates within lipid metabolism; fatty acid biosynthesis. Catalyzes the elongation by iterative transfer of p-hydroxybenzoyl group from FadD22 (pHBA-S-FAdD22) to form p-hydroxyphenylalkanoate (pHPA) intermediates during phenolphthiocerol (PPOL) biosynthesis. PPOL is an important intermediate in the biosynthesis of phenolic glycolipid (mycosid B). This is Phenolphthiocerol synthesis polyketide synthase type I Pks15/1 (pks15/1) from Mycobacterium marinum (strain ATCC BAA-535 / M).